We begin with the raw amino-acid sequence, 181 residues long: ATP-dependent protease subunit HslV (181 aa).

The active site involves T8. Positions 165, 168, and 171 each coordinate Na(+).

Belongs to the peptidase T1B family. HslV subfamily. In terms of assembly, a double ring-shaped homohexamer of HslV is capped on each side by a ring-shaped HslU homohexamer. The assembly of the HslU/HslV complex is dependent on binding of ATP.

It is found in the cytoplasm. The enzyme catalyses ATP-dependent cleavage of peptide bonds with broad specificity.. Allosterically activated by HslU binding. Functionally, protease subunit of a proteasome-like degradation complex believed to be a general protein degrading machinery. The protein is ATP-dependent protease subunit HslV of Oceanobacillus iheyensis (strain DSM 14371 / CIP 107618 / JCM 11309 / KCTC 3954 / HTE831).